The chain runs to 417 residues: Pelargonidin 3-O-(6-caffeoylglucoside) 5-O-(6-O-malonylglucoside) 4'''-malonyltransferase (417 aa).

Active-site proton acceptor residues include histidine 147 and aspartate 360.

The protein belongs to the plant acyltransferase family. In terms of assembly, monomer. In terms of tissue distribution, expressed at higher level in recently opened, fully pigmented flowers.

It catalyses the reaction 4'''-demalonylsalvianin + malonyl-CoA = salvianin + CoA. The protein operates within pigment biosynthesis; anthocyanin biosynthesis. With respect to regulation, inhibited by the following metal ions: Cd(2+), Cu(2+), Fe(2+), Hg(2+) and Zn(2+). Activity is strongly inhibited by CoA-SH and partially inhibited by acetyl-CoA, caffeic acid and bisdemalonylsalvianin. In terms of biological role, catalyzes the transfer of the malonyl group from malonyl-CoA to the 4'''-hydroxyl group of the 5-glucosyl moiety of anthocyanins. Anthocyanins are ubiquitous colored pigments that are responsible for petal color. The polypeptide is Pelargonidin 3-O-(6-caffeoylglucoside) 5-O-(6-O-malonylglucoside) 4'''-malonyltransferase (Salvia splendens (Scarlet sage)).